Here is a 279-residue protein sequence, read N- to C-terminus: 4-hydroxy-3-methylbut-2-enyl diphosphate reductase (279 aa).

Cys-12 contributes to the [4Fe-4S] cluster binding site. The (2E)-4-hydroxy-3-methylbut-2-enyl diphosphate site is built by His-42 and His-74. Residues His-42 and His-74 each contribute to the dimethylallyl diphosphate site. Isopentenyl diphosphate-binding residues include His-42 and His-74. Cys-96 is a [4Fe-4S] cluster binding site. Residue His-124 participates in (2E)-4-hydroxy-3-methylbut-2-enyl diphosphate binding. His-124 provides a ligand contact to dimethylallyl diphosphate. Residue His-124 participates in isopentenyl diphosphate binding. Glu-126 (proton donor) is an active-site residue. Thr-162 is a (2E)-4-hydroxy-3-methylbut-2-enyl diphosphate binding site. Cys-190 contributes to the [4Fe-4S] cluster binding site. (2E)-4-hydroxy-3-methylbut-2-enyl diphosphate is bound by residues Ser-218, Ser-219, Asn-220, and Ser-263. Residues Ser-218, Ser-219, Asn-220, and Ser-263 each coordinate dimethylallyl diphosphate. Isopentenyl diphosphate contacts are provided by Ser-218, Ser-219, Asn-220, and Ser-263.

The protein belongs to the IspH family. The cofactor is [4Fe-4S] cluster.

It carries out the reaction isopentenyl diphosphate + 2 oxidized [2Fe-2S]-[ferredoxin] + H2O = (2E)-4-hydroxy-3-methylbut-2-enyl diphosphate + 2 reduced [2Fe-2S]-[ferredoxin] + 2 H(+). The enzyme catalyses dimethylallyl diphosphate + 2 oxidized [2Fe-2S]-[ferredoxin] + H2O = (2E)-4-hydroxy-3-methylbut-2-enyl diphosphate + 2 reduced [2Fe-2S]-[ferredoxin] + 2 H(+). It functions in the pathway isoprenoid biosynthesis; dimethylallyl diphosphate biosynthesis; dimethylallyl diphosphate from (2E)-4-hydroxy-3-methylbutenyl diphosphate: step 1/1. Its pathway is isoprenoid biosynthesis; isopentenyl diphosphate biosynthesis via DXP pathway; isopentenyl diphosphate from 1-deoxy-D-xylulose 5-phosphate: step 6/6. Its function is as follows. Catalyzes the conversion of 1-hydroxy-2-methyl-2-(E)-butenyl 4-diphosphate (HMBPP) into a mixture of isopentenyl diphosphate (IPP) and dimethylallyl diphosphate (DMAPP). Acts in the terminal step of the DOXP/MEP pathway for isoprenoid precursor biosynthesis. The protein is 4-hydroxy-3-methylbut-2-enyl diphosphate reductase of Alkaliphilus oremlandii (strain OhILAs) (Clostridium oremlandii (strain OhILAs)).